The chain runs to 688 residues: Elongation factor G (688 aa).

Residues 6 to 280 enclose the tr-type G domain; the sequence is KLFRNFGIMA…AVVDFLPSPI (275 aa). Residues 15–22, 79–83, and 133–136 contribute to the GTP site; these read AHIDAGKT, DTPGH, and NKMD.

This sequence belongs to the TRAFAC class translation factor GTPase superfamily. Classic translation factor GTPase family. EF-G/EF-2 subfamily.

It is found in the cytoplasm. Functionally, catalyzes the GTP-dependent ribosomal translocation step during translation elongation. During this step, the ribosome changes from the pre-translocational (PRE) to the post-translocational (POST) state as the newly formed A-site-bound peptidyl-tRNA and P-site-bound deacylated tRNA move to the P and E sites, respectively. Catalyzes the coordinated movement of the two tRNA molecules, the mRNA and conformational changes in the ribosome. This chain is Elongation factor G, found in Ureaplasma urealyticum serovar 10 (strain ATCC 33699 / Western).